The primary structure comprises 889 residues: Mitochondrial intermediate peptidase (889 aa).

A mitochondrion-targeting transit peptide spans 1–30 (MASTSKNAQRAAASVAHSYHVCLARRMSRL). The interval 60-112 (SSSLAAQRVQRPTSAGPILTNPISDHEKDNDELRSLFDAPPTSSSANHLRSSG) is disordered. Positions 83–94 (SDHEKDNDELRS) are enriched in basic and acidic residues. The segment covering 100–112 (PTSSSANHLRSSG) has biased composition (polar residues). His-670 provides a ligand contact to Zn(2+). The active site involves Glu-671. His-674 and His-677 together coordinate Zn(2+).

Belongs to the peptidase M3 family. It depends on Zn(2+) as a cofactor.

It localises to the mitochondrion matrix. The enzyme catalyses Release of an N-terminal octapeptide as second stage of processing of some proteins imported into the mitochondrion.. In terms of biological role, cleaves proteins, imported into the mitochondrion, to their mature size. While most mitochondrial precursor proteins are processed to the mature form in one step by mitochondrial processing peptidase (MPP), the sequential cleavage by MIP of an octapeptide after initial processing by MPP is a required step for a subgroup of nuclear-encoded precursor proteins destined for the matrix or the inner membrane. This chain is Mitochondrial intermediate peptidase (OCT1), found in Mycosarcoma maydis (Corn smut fungus).